Here is a 192-residue protein sequence, read N- to C-terminus: 3-hydroxyanthranilate 3,4-dioxygenase 1 (192 aa).

Arg-50 contributes to the O2 binding site. 3 residues coordinate Fe cation: His-54, Glu-60, and His-102. Residue Glu-60 participates in substrate binding. Residues Arg-106 and Glu-116 each coordinate substrate. A divalent metal cation contacts are provided by Cys-131, Cys-134, Cys-168, and Cys-171.

Belongs to the 3-HAO family. Fe(2+) serves as cofactor.

It localises to the cytoplasm. It catalyses the reaction 3-hydroxyanthranilate + O2 = (2Z,4Z)-2-amino-3-carboxymuconate 6-semialdehyde. The protein operates within cofactor biosynthesis; NAD(+) biosynthesis; quinolinate from L-kynurenine: step 3/3. In terms of biological role, catalyzes the oxidative ring opening of 3-hydroxyanthranilate to 2-amino-3-carboxymuconate semialdehyde, which spontaneously cyclizes to quinolinate. This chain is 3-hydroxyanthranilate 3,4-dioxygenase 1 (bna1-1), found in Aspergillus oryzae (strain ATCC 42149 / RIB 40) (Yellow koji mold).